The sequence spans 283 residues: Polyamine aminopropyltransferase (283 aa).

The PABS domain occupies 5 to 238 (QTWIDEYHKG…GIWSWTFASS (234 aa)). Glutamine 32 contributes to the S-methyl-5'-thioadenosine binding site. Residues histidine 63 and aspartate 87 each coordinate spermidine. Residues glutamate 107 and 139–140 (DG) contribute to the S-methyl-5'-thioadenosine site. Aspartate 158 (proton acceptor) is an active-site residue. Position 158 to 161 (158 to 161 (DCSD)) interacts with spermidine.

It belongs to the spermidine/spermine synthase family. In terms of assembly, homodimer or homotetramer.

Its subcellular location is the cytoplasm. It catalyses the reaction S-adenosyl 3-(methylsulfanyl)propylamine + putrescine = S-methyl-5'-thioadenosine + spermidine + H(+). It participates in amine and polyamine biosynthesis; spermidine biosynthesis; spermidine from putrescine: step 1/1. Its function is as follows. Catalyzes the irreversible transfer of a propylamine group from the amino donor S-adenosylmethioninamine (decarboxy-AdoMet) to putrescine (1,4-diaminobutane) to yield spermidine. The polypeptide is Polyamine aminopropyltransferase (Prochlorococcus marinus (strain MIT 9301)).